The following is a 218-amino-acid chain: MNLSCSLVLLGGGRGERFNSPQPKQYTPLCGEPLILHALHSYQSLPFIQEIVVVCEEHYQELFSPYSVKFASPGALRQDSVFSGLQQVSLPWVCVHDGVRPFVYANEVSEVCSAALKTGAAALATSATYTIKSRTPVRTLDRDAVAVIHTPQCINTEILKEGLLLANMMDFTLSDDSEAAELLGIEPTLVFSNRVQMKITYPEDLLFAEALLSKAHIR.

The protein belongs to the IspD/TarI cytidylyltransferase family. IspD subfamily.

The catalysed reaction is 2-C-methyl-D-erythritol 4-phosphate + CTP + H(+) = 4-CDP-2-C-methyl-D-erythritol + diphosphate. It functions in the pathway isoprenoid biosynthesis; isopentenyl diphosphate biosynthesis via DXP pathway; isopentenyl diphosphate from 1-deoxy-D-xylulose 5-phosphate: step 2/6. Functionally, catalyzes the formation of 4-diphosphocytidyl-2-C-methyl-D-erythritol from CTP and 2-C-methyl-D-erythritol 4-phosphate (MEP). This Chlamydia muridarum (strain MoPn / Nigg) protein is 2-C-methyl-D-erythritol 4-phosphate cytidylyltransferase.